Reading from the N-terminus, the 686-residue chain is DNA topoisomerase 1 (686 aa).

One can recognise a Toprim domain in the interval 1 to 141 (MILIIAEKPN…KRMKFSALTK (141 aa)). Positions 7 and 107 each coordinate Mg(2+). One can recognise a Topo IA-type catalytic domain in the interval 156–574 (NFGMANAGIA…EAKERLTKIL (419 aa)). The interval 196-201 (STGRVQ) is interaction with DNA. The active-site O-(5'-phospho-DNA)-tyrosine intermediate is the tyrosine 317. The C4-type 1 zinc-finger motif lies at 606–634 (CPKCGGDLIVKYNKKTGKRFVGCSNWPKC). The segment at 653–678 (CCNGAPVVIIREEDGREFEICLDINC) adopts a C4-type 2; atypical zinc-finger fold.

The protein belongs to the type IA topoisomerase family. Monomer. Requires Mg(2+) as cofactor.

The enzyme catalyses ATP-independent breakage of single-stranded DNA, followed by passage and rejoining.. In terms of biological role, releases the supercoiling and torsional tension of DNA, which is introduced during the DNA replication and transcription, by transiently cleaving and rejoining one strand of the DNA duplex. Introduces a single-strand break via transesterification at a target site in duplex DNA. The scissile phosphodiester is attacked by the catalytic tyrosine of the enzyme, resulting in the formation of a DNA-(5'-phosphotyrosyl)-enzyme intermediate and the expulsion of a 3'-OH DNA strand. The free DNA strand then undergoes passage around the unbroken strand, thus removing DNA supercoils. Finally, in the religation step, the DNA 3'-OH attacks the covalent intermediate to expel the active-site tyrosine and restore the DNA phosphodiester backbone. This Pyrococcus horikoshii (strain ATCC 700860 / DSM 12428 / JCM 9974 / NBRC 100139 / OT-3) protein is DNA topoisomerase 1.